The chain runs to 498 residues: Ribulose bisphosphate carboxylase large chain (498 aa).

The propeptide occupies 1-2 (MS). Proline 3 is modified (N-acetylproline). Lysine 14 carries the N6,N6,N6-trimethyllysine modification. Positions 123 and 173 each coordinate substrate. Lysine 175 functions as the Proton acceptor in the catalytic mechanism. Substrate is bound at residue lysine 177. 3 residues coordinate Mg(2+): lysine 201, aspartate 203, and glutamate 204. Lysine 201 carries the N6-carboxylysine modification. The Proton acceptor role is filled by histidine 294. Substrate is bound by residues arginine 295, histidine 327, and serine 379. Residues 473–498 (DTLDPNDKKQRDNEDTLADKFFGDKG) are disordered.

It belongs to the RuBisCO large chain family. Type I subfamily. Heterohexadecamer of 8 large chains and 8 small chains; disulfide-linked. The disulfide link is formed within the large subunit homodimers. It depends on Mg(2+) as a cofactor. The disulfide bond which can form in the large chain dimeric partners within the hexadecamer appears to be associated with oxidative stress and protein turnover.

The protein resides in the plastid. The catalysed reaction is 2 (2R)-3-phosphoglycerate + 2 H(+) = D-ribulose 1,5-bisphosphate + CO2 + H2O. It carries out the reaction D-ribulose 1,5-bisphosphate + O2 = 2-phosphoglycolate + (2R)-3-phosphoglycerate + 2 H(+). In terms of biological role, ruBisCO catalyzes two reactions: the carboxylation of D-ribulose 1,5-bisphosphate, the primary event in carbon dioxide fixation, as well as the oxidative fragmentation of the pentose substrate in the photorespiration process. Both reactions occur simultaneously and in competition at the same active site. The sequence is that of Ribulose bisphosphate carboxylase large chain from Cuscuta exaltata (Tall dodder).